Here is a 439-residue protein sequence, read N- to C-terminus: Probable N-acetylmuramidase (439 aa).

A signal peptide spans 1–57 (MPVSRIKVKNRHLKKKAKKPLAFYKPATKFAGAVLIAGTLTTTHELLLQQTSPMVQA). 2 disordered regions span residues 218–241 (SAGT…TSST) and 287–320 (SSSS…PASQ). The LysM 1 domain maps to 241 to 284 (TTYTVKSGDTLWGISQKYGISVAQIQSANNLKSTVIYIGQKLVL). Low complexity predominate over residues 287 to 319 (SSSSSNTNSSTSSGNSAGTTTPTTSVTPAKPAS). A LysM 2 domain is found at 321–364 (TTIKVKSGDTLWGLSVKYKTTIAQLKSWNHLNSDTIFIGQNLIV). The tract at residues 372–393 (SSSTGSSSASTSSTSNSSAASN) is disordered. A LysM 3 domain is found at 395–438 (SIHKVVKGDTLWGLSQKSGSPIASIKAWNHLSSDTILIGQYLRI).

Belongs to the glycosyl hydrolase 73 family.

The protein localises to the secreted. The enzyme catalyses Hydrolysis of (1-&gt;4)-beta-linkages between N-acetylmuramic acid and N-acetyl-D-glucosamine residues in a peptidoglycan and between N-acetyl-D-glucosamine residues in chitodextrins.. In terms of biological role, required for cell separation during growth. The sequence is that of Probable N-acetylmuramidase (acmA) from Lactococcus lactis subsp. lactis (strain IL1403) (Streptococcus lactis).